The primary structure comprises 290 residues: 4-hydroxybenzoate octaprenyltransferase (290 aa).

6 helical membrane-spanning segments follow: residues 41–61 (WPLL…GCAM), 89–109 (WEAV…IQPL), 133–153 (FFAI…PMAF), 158–178 (DTVP…SVAY), 202–224 (FGRF…YVWI), and 269–289 (WLGG…GTAG).

It belongs to the UbiA prenyltransferase family. Mg(2+) is required as a cofactor.

Its subcellular location is the cell inner membrane. The catalysed reaction is all-trans-octaprenyl diphosphate + 4-hydroxybenzoate = 4-hydroxy-3-(all-trans-octaprenyl)benzoate + diphosphate. The protein operates within cofactor biosynthesis; ubiquinone biosynthesis. In terms of biological role, catalyzes the prenylation of para-hydroxybenzoate (PHB) with an all-trans polyprenyl group. Mediates the second step in the final reaction sequence of ubiquinone-8 (UQ-8) biosynthesis, which is the condensation of the polyisoprenoid side chain with PHB, generating the first membrane-bound Q intermediate 3-octaprenyl-4-hydroxybenzoate. This is 4-hydroxybenzoate octaprenyltransferase from Burkholderia ambifaria (strain ATCC BAA-244 / DSM 16087 / CCUG 44356 / LMG 19182 / AMMD) (Burkholderia cepacia (strain AMMD)).